The chain runs to 98 residues: Large ribosomal subunit protein uL23 (98 aa).

This sequence belongs to the universal ribosomal protein uL23 family. Part of the 50S ribosomal subunit. Contacts protein L29, and trigger factor when it is bound to the ribosome.

Its function is as follows. One of the early assembly proteins it binds 23S rRNA. One of the proteins that surrounds the polypeptide exit tunnel on the outside of the ribosome. Forms the main docking site for trigger factor binding to the ribosome. In Bordetella petrii (strain ATCC BAA-461 / DSM 12804 / CCUG 43448), this protein is Large ribosomal subunit protein uL23.